The following is a 280-amino-acid chain: Ribose-phosphate pyrophosphokinase (280 aa).

Residues 32–34 (DGE) and 89–90 (RQ) each bind ATP. Residues histidine 122 and aspartate 160 each contribute to the Mg(2+) site. The active site involves lysine 183. D-ribose 5-phosphate-binding positions include arginine 185, aspartate 209, and 213-217 (STGGT).

This sequence belongs to the ribose-phosphate pyrophosphokinase family. Class III (archaeal) subfamily. Mg(2+) is required as a cofactor.

Its subcellular location is the cytoplasm. It carries out the reaction D-ribose 5-phosphate + ATP = 5-phospho-alpha-D-ribose 1-diphosphate + AMP + H(+). Its pathway is metabolic intermediate biosynthesis; 5-phospho-alpha-D-ribose 1-diphosphate biosynthesis; 5-phospho-alpha-D-ribose 1-diphosphate from D-ribose 5-phosphate (route I): step 1/1. Activated by Co(2+) and Ni(2+) ions, however Mg(2+) ion shows almost no significant effect on the activity. Equally inhibited by ADP, CTP and GTP, while dTTP and UTP are less inhibitory. Functionally, involved in the biosynthesis of the central metabolite phospho-alpha-D-ribosyl-1-pyrophosphate (PRPP) via the transfer of pyrophosphoryl group from ATP to 1-hydroxyl of ribose-5-phosphate (Rib-5-P). It can also use CTP and GTP as substrates in addition to ATP. This Thermococcus kodakarensis (strain ATCC BAA-918 / JCM 12380 / KOD1) (Pyrococcus kodakaraensis (strain KOD1)) protein is Ribose-phosphate pyrophosphokinase.